A 150-amino-acid polypeptide reads, in one-letter code: SsrA-binding protein (150 aa).

The protein belongs to the SmpB family.

The protein localises to the cytoplasm. Required for rescue of stalled ribosomes mediated by trans-translation. Binds to transfer-messenger RNA (tmRNA), required for stable association of tmRNA with ribosomes. tmRNA and SmpB together mimic tRNA shape, replacing the anticodon stem-loop with SmpB. tmRNA is encoded by the ssrA gene; the 2 termini fold to resemble tRNA(Ala) and it encodes a 'tag peptide', a short internal open reading frame. During trans-translation Ala-aminoacylated tmRNA acts like a tRNA, entering the A-site of stalled ribosomes, displacing the stalled mRNA. The ribosome then switches to translate the ORF on the tmRNA; the nascent peptide is terminated with the 'tag peptide' encoded by the tmRNA and targeted for degradation. The ribosome is freed to recommence translation, which seems to be the essential function of trans-translation. The protein is SsrA-binding protein of Campylobacter curvus (strain 525.92).